The primary structure comprises 618 residues: Chaperone protein DnaK (618 aa).

Residue Thr-175 is modified to Phosphothreonine; by autocatalysis. The tract at residues 576 to 618 (SQNAEPGADGGANSGANPGGTTGNTDTKDDNVVDAEYKVDDDK) is disordered. Positions 583–597 (ADGGANSGANPGGTT) are enriched in gly residues. Over residues 601–618 (DTKDDNVVDAEYKVDDDK) the composition is skewed to basic and acidic residues.

The protein belongs to the heat shock protein 70 family.

Its function is as follows. Acts as a chaperone. This Clostridium kluyveri (strain NBRC 12016) protein is Chaperone protein DnaK.